We begin with the raw amino-acid sequence, 185 residues long: Shikimate kinase (185 aa).

Glycine 15–threonine 20 contacts ATP. Serine 19 contacts Mg(2+). Substrate contacts are provided by aspartate 37, arginine 61, and glycine 83. Arginine 121 contributes to the ATP binding site. Residue arginine 146 participates in substrate binding.

It belongs to the shikimate kinase family. As to quaternary structure, monomer. Mg(2+) serves as cofactor.

It is found in the cytoplasm. It catalyses the reaction shikimate + ATP = 3-phosphoshikimate + ADP + H(+). Its pathway is metabolic intermediate biosynthesis; chorismate biosynthesis; chorismate from D-erythrose 4-phosphate and phosphoenolpyruvate: step 5/7. Functionally, catalyzes the specific phosphorylation of the 3-hydroxyl group of shikimic acid using ATP as a cosubstrate. The protein is Shikimate kinase of Blochmanniella floridana.